Reading from the N-terminus, the 229-residue chain is MSARFIAVFCLFFTVTAHAQAPRTFSEAKKVAWKLYAPQSTEFYCGCKYNGNRVDLKACGYVPRKNANRADASNGNTSSRPGRSGISASAGKPVGAKTVRATTTCSSAPRRTCTTWCRASVRSMATVTTSVLDGCRCNVGKYGSCLTQVDFKAKKVMPRPSIRGMIARTYFYMSKQYGLRLSKQDRQLYEAWNKTYPVQPWERQRNQTVACVMGRGNEFVGPVNLKACG.

Positions 1–19 (MSARFIAVFCLFFTVTAHA) are cleaved as a signal peptide. The tract at residues 69 to 95 (RADASNGNTSSRPGRSGISASAGKPVG) is disordered. The segment covering 71–81 (DASNGNTSSRP) has biased composition (polar residues).

The protein belongs to the EndA/NucM nuclease family.

The protein resides in the secreted. The chain is Extracellular endonuclease (endX) from Pseudomonas fluorescens biotype A.